We begin with the raw amino-acid sequence, 305 residues long: MPITLPATLPAFDVLTHEGVMVMTPERAARQDIRPLRIGLLNLMPKKIQTENQFARLIGATPLQIDFQLIRMTEHQTKNTAAEHMEAFYRPFQEVKHEKFDGLIITGAPIEHLDFADVTYWDELCEVMDWTQTNVQSTFGVCWGGMAMIYHFHRVQKHRLQAKAFGCFRHRNVAPTSPYLRGFSDDFVIPVSRWTEMRQAEIDAAPGLRTLLASDEAGPCLVEDPGHRALYIFNHFEYDSDTLKQEYDRDVANGKPINVPANYYPDDDPSKPPLNRWRSHAHLLYGNWINEIYQSTPYDPQQIGR.

Cysteine 142 serves as the catalytic Acyl-thioester intermediate. Substrate is bound by residues lysine 163 and serine 192. The active-site Proton acceptor is the histidine 235. Glutamate 237 is an active-site residue. Substrate is bound at residue arginine 249.

This sequence belongs to the MetA family.

The protein localises to the cytoplasm. It carries out the reaction L-homoserine + acetyl-CoA = O-acetyl-L-homoserine + CoA. It functions in the pathway amino-acid biosynthesis; L-methionine biosynthesis via de novo pathway; O-acetyl-L-homoserine from L-homoserine: step 1/1. Transfers an acetyl group from acetyl-CoA to L-homoserine, forming acetyl-L-homoserine. This is Homoserine O-acetyltransferase from Cereibacter sphaeroides (strain KD131 / KCTC 12085) (Rhodobacter sphaeroides).